The following is a 102-amino-acid chain: Small ribosomal subunit protein uS10 (102 aa).

Belongs to the universal ribosomal protein uS10 family. As to quaternary structure, part of the 30S ribosomal subunit.

Functionally, involved in the binding of tRNA to the ribosomes. In Mesorhizobium japonicum (strain LMG 29417 / CECT 9101 / MAFF 303099) (Mesorhizobium loti (strain MAFF 303099)), this protein is Small ribosomal subunit protein uS10.